Here is a 303-residue protein sequence, read N- to C-terminus: 4-hydroxy-3-methylbut-2-enyl diphosphate reductase (303 aa).

Cys12 provides a ligand contact to [4Fe-4S] cluster. (2E)-4-hydroxy-3-methylbut-2-enyl diphosphate contacts are provided by His42 and His75. Residues His42 and His75 each contribute to the dimethylallyl diphosphate site. Isopentenyl diphosphate contacts are provided by His42 and His75. Cys97 contacts [4Fe-4S] cluster. His125 serves as a coordination point for (2E)-4-hydroxy-3-methylbut-2-enyl diphosphate. His125 contacts dimethylallyl diphosphate. Residue His125 coordinates isopentenyl diphosphate. Glu127 acts as the Proton donor in catalysis. A (2E)-4-hydroxy-3-methylbut-2-enyl diphosphate-binding site is contributed by Ser164. Cys192 contributes to the [4Fe-4S] cluster binding site. (2E)-4-hydroxy-3-methylbut-2-enyl diphosphate is bound by residues Ser220, Ser221, Asn222, and Ser264. Dimethylallyl diphosphate contacts are provided by Ser220, Ser221, Asn222, and Ser264. Isopentenyl diphosphate-binding residues include Ser220, Ser221, Asn222, and Ser264.

It belongs to the IspH family. It depends on [4Fe-4S] cluster as a cofactor.

The enzyme catalyses isopentenyl diphosphate + 2 oxidized [2Fe-2S]-[ferredoxin] + H2O = (2E)-4-hydroxy-3-methylbut-2-enyl diphosphate + 2 reduced [2Fe-2S]-[ferredoxin] + 2 H(+). It catalyses the reaction dimethylallyl diphosphate + 2 oxidized [2Fe-2S]-[ferredoxin] + H2O = (2E)-4-hydroxy-3-methylbut-2-enyl diphosphate + 2 reduced [2Fe-2S]-[ferredoxin] + 2 H(+). It functions in the pathway isoprenoid biosynthesis; dimethylallyl diphosphate biosynthesis; dimethylallyl diphosphate from (2E)-4-hydroxy-3-methylbutenyl diphosphate: step 1/1. The protein operates within isoprenoid biosynthesis; isopentenyl diphosphate biosynthesis via DXP pathway; isopentenyl diphosphate from 1-deoxy-D-xylulose 5-phosphate: step 6/6. In terms of biological role, catalyzes the conversion of 1-hydroxy-2-methyl-2-(E)-butenyl 4-diphosphate (HMBPP) into a mixture of isopentenyl diphosphate (IPP) and dimethylallyl diphosphate (DMAPP). Acts in the terminal step of the DOXP/MEP pathway for isoprenoid precursor biosynthesis. In Neorickettsia sennetsu (strain ATCC VR-367 / Miyayama) (Ehrlichia sennetsu), this protein is 4-hydroxy-3-methylbut-2-enyl diphosphate reductase.